The sequence spans 280 residues: Dermonecrotic toxin LgSicTox-alphaIC1 (280 aa).

Residue H12 is part of the active site. Mg(2+) contacts are provided by E32 and D34. The Nucleophile role is filled by H48. 2 disulfides stabilise this stretch: C52-C58 and C54-C197. D92 contributes to the Mg(2+) binding site.

Belongs to the arthropod phospholipase D family. Class II subfamily. Mg(2+) is required as a cofactor. As to expression, expressed by the venom gland.

The protein resides in the secreted. It catalyses the reaction an N-(acyl)-sphingosylphosphocholine = an N-(acyl)-sphingosyl-1,3-cyclic phosphate + choline. The enzyme catalyses an N-(acyl)-sphingosylphosphoethanolamine = an N-(acyl)-sphingosyl-1,3-cyclic phosphate + ethanolamine. It carries out the reaction a 1-acyl-sn-glycero-3-phosphocholine = a 1-acyl-sn-glycero-2,3-cyclic phosphate + choline. The catalysed reaction is a 1-acyl-sn-glycero-3-phosphoethanolamine = a 1-acyl-sn-glycero-2,3-cyclic phosphate + ethanolamine. Its function is as follows. Dermonecrotic toxins cleave the phosphodiester linkage between the phosphate and headgroup of certain phospholipids (sphingolipid and lysolipid substrates), forming an alcohol (often choline) and a cyclic phosphate. This toxin acts on sphingomyelin (SM) with high activity. It may also act on ceramide phosphoethanolamine (CPE), lysophosphatidylcholine (LPC) and lysophosphatidylethanolamine (LPE), but not on lysophosphatidylserine (LPS), and lysophosphatidylglycerol (LPG). It acts by transphosphatidylation, releasing exclusively cyclic phosphate products as second products. Induces platelet aggregation in platelet rich plasma, but not in washed platelet, indicating that this activity is dependent on plasma components. Also induces hemolysis. In vivo, the recombinant protein evokes an intense inflammatory reaction and dermonecrosis, similar to those induced by L.gaucho total venom. Is a good immunogen, capable of inducing immunoprotection in test animals. Functionally, anionic antimicrobial peptide that shows antimicrobial activity against Gram-negative bacteria (MIC=1.15-4.6 uM) (tested on E.coli, P.aeruginosa, and E.cloacae), but not on Gram-negative bacteria (M.luteus, S.aureus, and B.subtilis), neither on fungi and yeasts (A.niger, C.albicans and C.krusei). Does not show hemolytic effects against human erythrocytes, and has no cytotoxic effects against human cervical carcinoma cells (HeLa). The polypeptide is Dermonecrotic toxin LgSicTox-alphaIC1 (Loxosceles gaucho (Spider)).